We begin with the raw amino-acid sequence, 160 residues long: Putative 4-hydroxy-4-methyl-2-oxoglutarate aldolase (160 aa).

Substrate contacts are provided by residues 75-78 (GDQL) and Arg-97. Position 98 (Asp-98) interacts with a divalent metal cation.

This sequence belongs to the class II aldolase/RraA-like family. As to quaternary structure, homotrimer. A divalent metal cation serves as cofactor.

It catalyses the reaction 4-hydroxy-4-methyl-2-oxoglutarate = 2 pyruvate. It carries out the reaction oxaloacetate + H(+) = pyruvate + CO2. Its function is as follows. Catalyzes the aldol cleavage of 4-hydroxy-4-methyl-2-oxoglutarate (HMG) into 2 molecules of pyruvate. Also contains a secondary oxaloacetate (OAA) decarboxylase activity due to the common pyruvate enolate transition state formed following C-C bond cleavage in the retro-aldol and decarboxylation reactions. The polypeptide is Putative 4-hydroxy-4-methyl-2-oxoglutarate aldolase (Vibrio parahaemolyticus serotype O3:K6 (strain RIMD 2210633)).